The primary structure comprises 218 residues: MGQKINPLGFRLGTTQSHHSLWFAQPKKYSEGLEEDKKIRDCIKNYVQKNIRISSGMEGIARIEIQKRIDLIQIIIYMGFPKLLIEDKPRRVEELQMNVQKELNCVNKKLNIAITRISNPYGDPNILAEFIAGQLKNRVSFRKAMKKAIELTEQANTKGIQVQIAGRIDGKEIARVEWIREGRVPLQTIEAKIDYCSSTVRTIYGVLGIKIWIFVDED.

Positions 47–118 (VQKNIRISSG…KLNIAITRIS (72 aa)) constitute a KH type-2 domain.

The protein belongs to the universal ribosomal protein uS3 family. Part of the 30S ribosomal subunit.

It localises to the plastid. The protein resides in the chloroplast. In Crucihimalaya wallichii (Rock-cress), this protein is Small ribosomal subunit protein uS3c (rps3).